A 210-amino-acid chain; its full sequence is Translation initiation factor IF-3 (210 aa).

The segment at 169-210 is disordered; sequence APKQAPAPKKERTEESAEKAGSAGETEPVPAASAAAEAPANV. Residues 176–186 show a composition bias toward basic and acidic residues; the sequence is PKKERTEESAE. Residues 187 to 210 show a composition bias toward low complexity; sequence KAGSAGETEPVPAASAAAEAPANV.

The protein belongs to the IF-3 family. As to quaternary structure, monomer.

Its subcellular location is the cytoplasm. In terms of biological role, IF-3 binds to the 30S ribosomal subunit and shifts the equilibrium between 70S ribosomes and their 50S and 30S subunits in favor of the free subunits, thus enhancing the availability of 30S subunits on which protein synthesis initiation begins. This chain is Translation initiation factor IF-3, found in Deinococcus deserti (strain DSM 17065 / CIP 109153 / LMG 22923 / VCD115).